The following is a 497-amino-acid chain: Glycerol kinase (497 aa).

Threonine 13 is a binding site for ADP. ATP contacts are provided by threonine 13, threonine 14, and serine 15. Threonine 13 contacts sn-glycerol 3-phosphate. Arginine 17 lines the ADP pocket. Residues arginine 83, glutamate 84, and tyrosine 135 each contribute to the sn-glycerol 3-phosphate site. Glycerol contacts are provided by arginine 83, glutamate 84, and tyrosine 135. A Phosphohistidine; by HPr modification is found at histidine 231. Aspartate 245 is a binding site for sn-glycerol 3-phosphate. Glycerol contacts are provided by aspartate 245 and glutamine 246. ADP is bound by residues threonine 267 and glycine 310. Threonine 267, glycine 310, glutamine 314, and glycine 411 together coordinate ATP. The ADP site is built by glycine 411 and asparagine 415.

It belongs to the FGGY kinase family. Homotetramer and homodimer (in equilibrium). In terms of processing, the phosphoenolpyruvate-dependent sugar phosphotransferase system (PTS), including enzyme I, and histidine-containing protein (HPr) are required for the phosphorylation, which leads to the activation of the enzyme.

It carries out the reaction glycerol + ATP = sn-glycerol 3-phosphate + ADP + H(+). It participates in polyol metabolism; glycerol degradation via glycerol kinase pathway; sn-glycerol 3-phosphate from glycerol: step 1/1. With respect to regulation, activated by phosphorylation and inhibited by fructose 1,6-bisphosphate (FBP). Its function is as follows. Key enzyme in the regulation of glycerol uptake and metabolism. Catalyzes the phosphorylation of glycerol to yield sn-glycerol 3-phosphate. In Listeria monocytogenes serotype 4a (strain HCC23), this protein is Glycerol kinase.